The chain runs to 320 residues: Aspartate carbamoyltransferase catalytic subunit (320 aa).

Carbamoyl phosphate-binding residues include R58 and T59. K86 serves as a coordination point for L-aspartate. Positions 108, 136, and 139 each coordinate carbamoyl phosphate. Residues R169 and R223 each coordinate L-aspartate. The carbamoyl phosphate site is built by G264 and P265.

Belongs to the aspartate/ornithine carbamoyltransferase superfamily. ATCase family. Heterododecamer (2C3:3R2) of six catalytic PyrB chains organized as two trimers (C3), and six regulatory PyrI chains organized as three dimers (R2).

It catalyses the reaction carbamoyl phosphate + L-aspartate = N-carbamoyl-L-aspartate + phosphate + H(+). Its pathway is pyrimidine metabolism; UMP biosynthesis via de novo pathway; (S)-dihydroorotate from bicarbonate: step 2/3. Its function is as follows. Catalyzes the condensation of carbamoyl phosphate and aspartate to form carbamoyl aspartate and inorganic phosphate, the committed step in the de novo pyrimidine nucleotide biosynthesis pathway. The protein is Aspartate carbamoyltransferase catalytic subunit of Cereibacter sphaeroides (strain ATCC 17029 / ATH 2.4.9) (Rhodobacter sphaeroides).